The following is a 237-amino-acid chain: Uridylate kinase (237 aa).

9–12 (KLSG) lines the ATP pocket. Gly51 contributes to the UMP binding site. The ATP site is built by Gly52 and Arg56. UMP contacts are provided by residues Asp71 and 132 to 139 (CGNPFFTT). 3 residues coordinate ATP: Thr159, Tyr165, and Asp168.

It belongs to the UMP kinase family. In terms of assembly, homohexamer.

Its subcellular location is the cytoplasm. The enzyme catalyses UMP + ATP = UDP + ADP. The protein operates within pyrimidine metabolism; CTP biosynthesis via de novo pathway; UDP from UMP (UMPK route): step 1/1. With respect to regulation, inhibited by UTP. Catalyzes the reversible phosphorylation of UMP to UDP. The protein is Uridylate kinase of Prochlorococcus marinus (strain MIT 9313).